The chain runs to 312 residues: RNA binding protein fox-1 homolog 3 (312 aa).

Over residues M1 to P29 the composition is skewed to pro residues. Residues M1 to S104 form a disordered region. Polar residues predominate over residues T49–L87. An RRM domain is found at R100–A175. R223 carries the post-translational modification Asymmetric dimethylarginine; alternate. R223 is modified (omega-N-methylarginine; alternate). Position 272 is an asymmetric dimethylarginine (R272).

The protein resides in the nucleus. It is found in the cytoplasm. Functionally, pre-mRNA alternative splicing regulator. Regulates alternative splicing of RBFOX2 to enhance the production of mRNA species that are targeted for nonsense-mediated decay (NMD). The chain is RNA binding protein fox-1 homolog 3 (RBFOX3) from Homo sapiens (Human).